We begin with the raw amino-acid sequence, 307 residues long: Ribosomal RNA small subunit methyltransferase H (307 aa).

Residues 33 to 35 (GGY), aspartate 51, phenylalanine 78, aspartate 96, and glutamine 103 each bind S-adenosyl-L-methionine.

Belongs to the methyltransferase superfamily. RsmH family.

The protein localises to the cytoplasm. It carries out the reaction cytidine(1402) in 16S rRNA + S-adenosyl-L-methionine = N(4)-methylcytidine(1402) in 16S rRNA + S-adenosyl-L-homocysteine + H(+). Specifically methylates the N4 position of cytidine in position 1402 (C1402) of 16S rRNA. This Rickettsia conorii (strain ATCC VR-613 / Malish 7) protein is Ribosomal RNA small subunit methyltransferase H.